Here is a 179-residue protein sequence, read N- to C-terminus: Large ribosomal subunit protein uL5 (179 aa).

Belongs to the universal ribosomal protein uL5 family. In terms of assembly, part of the 50S ribosomal subunit; part of the 5S rRNA/L5/L18/L25 subcomplex. Contacts the 5S rRNA and the P site tRNA. Forms a bridge to the 30S subunit in the 70S ribosome.

This is one of the proteins that bind and probably mediate the attachment of the 5S RNA into the large ribosomal subunit, where it forms part of the central protuberance. In the 70S ribosome it contacts protein S13 of the 30S subunit (bridge B1b), connecting the 2 subunits; this bridge is implicated in subunit movement. Contacts the P site tRNA; the 5S rRNA and some of its associated proteins might help stabilize positioning of ribosome-bound tRNAs. The sequence is that of Large ribosomal subunit protein uL5 from Geobacillus kaustophilus (strain HTA426).